Reading from the N-terminus, the 693-residue chain is G1/S-specific cyclin CCN1 (693 aa).

Residues 273–298 (QKKQKKALSSNSSRTTTASYTHQNQS) show a composition bias toward polar residues. Disordered regions lie at residues 273–320 (QKKQ…EDDD), 465–571 (DEDE…PPGS), 595–615 (SNSS…EKRY), and 662–693 (NNTN…QYHQ). Acidic residues-rich tracts occupy residues 306–320 (DEDI…EDDD) and 465–476 (DEDENVSTDDEA). Composition is skewed to polar residues over residues 489-516 (DGNN…NHPQ) and 524-563 (PSAT…SSFA). Residues 666–685 (SSSPLMNQQQQQQVTQSSLY) are compositionally biased toward low complexity.

It belongs to the cyclin family. In terms of assembly, interacts with CDC28. The CDC28-CCN1 complex associates with septin CDC11 upon hyphal induction.

In terms of biological role, G1/S-specific cyclin essential for the control of the cell cycle at the G1/S (start) transition and for maintenance of filamentous growth. Through binding to CDC28 controls the phosphorylation of CDC11 and SEC2 upon induction of filamentous growth. This chain is G1/S-specific cyclin CCN1 (CCN1), found in Candida albicans (strain SC5314 / ATCC MYA-2876) (Yeast).